A 141-amino-acid polypeptide reads, in one-letter code: Nucleoside diphosphate kinase (141 aa).

ATP is bound by residues K11, F59, R87, T93, R104, and N114. H117 functions as the Pros-phosphohistidine intermediate in the catalytic mechanism.

The protein belongs to the NDK family. As to quaternary structure, homotetramer. It depends on Mg(2+) as a cofactor.

It is found in the cytoplasm. The catalysed reaction is a 2'-deoxyribonucleoside 5'-diphosphate + ATP = a 2'-deoxyribonucleoside 5'-triphosphate + ADP. It catalyses the reaction a ribonucleoside 5'-diphosphate + ATP = a ribonucleoside 5'-triphosphate + ADP. Major role in the synthesis of nucleoside triphosphates other than ATP. The ATP gamma phosphate is transferred to the NDP beta phosphate via a ping-pong mechanism, using a phosphorylated active-site intermediate. The polypeptide is Nucleoside diphosphate kinase (Paraburkholderia xenovorans (strain LB400)).